Here is a 151-residue protein sequence, read N- to C-terminus: UPF0178 protein PFLU_5917 (151 aa).

This sequence belongs to the UPF0178 family.

This Pseudomonas fluorescens (strain SBW25) protein is UPF0178 protein PFLU_5917.